We begin with the raw amino-acid sequence, 341 residues long: tRNA N6-adenosine threonylcarbamoyltransferase (341 aa).

Fe cation is bound by residues histidine 112 and histidine 116. Substrate is bound by residues 134 to 138 (LASGG), aspartate 167, glycine 180, and asparagine 279. A Fe cation-binding site is contributed by aspartate 307.

Belongs to the KAE1 / TsaD family. Requires Fe(2+) as cofactor.

It is found in the cytoplasm. It carries out the reaction L-threonylcarbamoyladenylate + adenosine(37) in tRNA = N(6)-L-threonylcarbamoyladenosine(37) in tRNA + AMP + H(+). Its function is as follows. Required for the formation of a threonylcarbamoyl group on adenosine at position 37 (t(6)A37) in tRNAs that read codons beginning with adenine. Is involved in the transfer of the threonylcarbamoyl moiety of threonylcarbamoyl-AMP (TC-AMP) to the N6 group of A37, together with TsaE and TsaB. TsaD likely plays a direct catalytic role in this reaction. The protein is tRNA N6-adenosine threonylcarbamoyltransferase of Rickettsia bellii (strain OSU 85-389).